We begin with the raw amino-acid sequence, 493 residues long: Cysteine sulfinic acid decarboxylase (493 aa).

Lys-305 is subject to N6-(pyridoxal phosphate)lysine.

Belongs to the group II decarboxylase family. Homodimer. The cofactor is pyridoxal 5'-phosphate. Expressed in brain, liver and kidney.

The catalysed reaction is L-aspartate + H(+) = beta-alanine + CO2. It catalyses the reaction 3-sulfino-L-alanine + H(+) = hypotaurine + CO2. The enzyme catalyses L-cysteate + H(+) = taurine + CO2. It functions in the pathway organosulfur biosynthesis; taurine biosynthesis; hypotaurine from L-cysteine: step 2/2. Functionally, catalyzes the decarboxylation of L-aspartate, 3-sulfino-L-alanine (cysteine sulfinic acid), and L-cysteate to beta-alanine, hypotaurine and taurine, respectively. The preferred substrate is 3-sulfino-L-alanine. Does not exhibit any decarboxylation activity toward glutamate. The chain is Cysteine sulfinic acid decarboxylase (Csad) from Rattus norvegicus (Rat).